The following is a 343-amino-acid chain: SUMO-activating enzyme subunit aos-1 (343 aa).

This sequence belongs to the ubiquitin-activating E1 family. Heterodimer of aos-1 and uba-2.

It functions in the pathway protein modification; protein sumoylation. The dimeric enzyme acts as an E1 ligase for smo-1. It mediates ATP-dependent activation of smo-1 and formation of a thioester with a conserved cysteine residue on uba-2. The chain is SUMO-activating enzyme subunit aos-1 (aos-1) from Caenorhabditis elegans.